The chain runs to 439 residues: Glutamate--tRNA ligase 2 (439 aa).

The 'HIGH' region signature appears at 6–16 (PSPTGDMHIGN). The 'KMSKS' region signature appears at 232–236 (KMSKR). Lys-235 is a binding site for ATP.

Belongs to the class-I aminoacyl-tRNA synthetase family. Glutamate--tRNA ligase type 1 subfamily. As to quaternary structure, monomer.

The protein resides in the cytoplasm. The enzyme catalyses tRNA(Glu) + L-glutamate + ATP = L-glutamyl-tRNA(Glu) + AMP + diphosphate. Catalyzes the attachment of glutamate to tRNA(Glu) in a two-step reaction: glutamate is first activated by ATP to form Glu-AMP and then transferred to the acceptor end of tRNA(Glu). This Helicobacter pylori (strain P12) protein is Glutamate--tRNA ligase 2.